A 257-amino-acid polypeptide reads, in one-letter code: Small ribosomal subunit protein uS2 (257 aa).

The protein belongs to the universal ribosomal protein uS2 family.

The protein is Small ribosomal subunit protein uS2 of Trichlorobacter lovleyi (strain ATCC BAA-1151 / DSM 17278 / SZ) (Geobacter lovleyi).